Here is a 42-residue protein sequence, read N- to C-terminus: Aryl-alcohol dehydrogenase (42 aa).

It belongs to the zinc-containing alcohol dehydrogenase family. In terms of assembly, homodimer. Zn(2+) is required as a cofactor.

It carries out the reaction an aromatic primary alcohol + NAD(+) = an aromatic aldehyde + NADH + H(+). Functionally, oxidizes primary alcohols with an aromatic or cyclohex-1-ene ring. It is highly specific for benzyl alcohol. This Acinetobacter guillouiae (Acinetobacter genomosp. 11) protein is Aryl-alcohol dehydrogenase.